Consider the following 245-residue polypeptide: Eukaryotic translation initiation factor 6 (245 aa).

At Tyr-113 the chain carries Phosphotyrosine. Thr-165 is modified (phosphothreonine). At Ser-166 the chain carries Phosphoserine. Residues Ser-174 and Ser-175 each carry the phosphoserine; by CK1 modification. Phosphoserine; by PKC is present on Ser-235. Phosphoserine is present on residues Ser-239 and Ser-243.

Belongs to the eIF-6 family. Monomer. Associates with the 60S ribosomal subunit. Interacts with RACK1. Interacts with DICER1, AGO2, TARBP2, MOV10 and RPL7A; they form a large RNA-induced silencing complex (RISC). In terms of processing, phosphorylation at Ser-174 and Ser-175 by CSNK1D/CK1 promotes nuclear export. Ufmylated by UFL1. In terms of tissue distribution, expressed at very high levels in colon carcinoma with lower levels in normal colon and ileum and lowest levels in kidney and muscle (at protein level).

It localises to the cytoplasm. It is found in the nucleus. The protein localises to the nucleolus. Functionally, binds to the 60S ribosomal subunit and prevents its association with the 40S ribosomal subunit to form the 80S initiation complex in the cytoplasm. Behaves as a stimulatory translation initiation factor downstream insulin/growth factors. Is also involved in ribosome biogenesis. Associates with pre-60S subunits in the nucleus and is involved in its nuclear export. Cytoplasmic release of TIF6 from 60S subunits and nuclear relocalization is promoted by a RACK1 (RACK1)-dependent protein kinase C activity. In tissues responsive to insulin, controls fatty acid synthesis and glycolysis by exerting translational control of adipogenic transcription factors such as CEBPB, CEBPD and ATF4 that have G/C rich or uORF in their 5'UTR. Required for ROS-dependent megakaryocyte maturation and platelets formation, controls the expression of mitochondrial respiratory chain genes involved in reactive oxygen species (ROS) synthesis. Involved in miRNA-mediated gene silencing by the RNA-induced silencing complex (RISC). Required for both miRNA-mediated translational repression and miRNA-mediated cleavage of complementary mRNAs by RISC. Modulates cell cycle progression and global translation of pre-B cells, its activation seems to be rate-limiting in tumorigenesis and tumor growth. The protein is Eukaryotic translation initiation factor 6 of Homo sapiens (Human).